A 205-amino-acid chain; its full sequence is Holliday junction branch migration complex subunit RuvA (205 aa).

The segment at 1 to 64 (MIGKLKGVID…EDMIRLYGFA (64 aa)) is domain I. Positions 65–143 (NQLEREWFRL…AFAGDASGTI (79 aa)) are domain II. Residues 144-152 (GLKQELGAG) are flexible linker. The tract at residues 153–205 (AAPAPVADAVSALSNLGYSRDQAANAVAAALKEAGENADSAKLIRLGLKELSR) is domain III.

This sequence belongs to the RuvA family. In terms of assembly, homotetramer. Forms an RuvA(8)-RuvB(12)-Holliday junction (HJ) complex. HJ DNA is sandwiched between 2 RuvA tetramers; dsDNA enters through RuvA and exits via RuvB. An RuvB hexamer assembles on each DNA strand where it exits the tetramer. Each RuvB hexamer is contacted by two RuvA subunits (via domain III) on 2 adjacent RuvB subunits; this complex drives branch migration. In the full resolvosome a probable DNA-RuvA(4)-RuvB(12)-RuvC(2) complex forms which resolves the HJ.

It localises to the cytoplasm. Functionally, the RuvA-RuvB-RuvC complex processes Holliday junction (HJ) DNA during genetic recombination and DNA repair, while the RuvA-RuvB complex plays an important role in the rescue of blocked DNA replication forks via replication fork reversal (RFR). RuvA specifically binds to HJ cruciform DNA, conferring on it an open structure. The RuvB hexamer acts as an ATP-dependent pump, pulling dsDNA into and through the RuvAB complex. HJ branch migration allows RuvC to scan DNA until it finds its consensus sequence, where it cleaves and resolves the cruciform DNA. This chain is Holliday junction branch migration complex subunit RuvA, found in Brucella anthropi (strain ATCC 49188 / DSM 6882 / CCUG 24695 / JCM 21032 / LMG 3331 / NBRC 15819 / NCTC 12168 / Alc 37) (Ochrobactrum anthropi).